The chain runs to 279 residues: Dermonecrotic toxin LrSicTox-alphaIA1i (279 aa).

His-11 is a catalytic residue. Mg(2+) contacts are provided by Glu-31 and Asp-33. His-47 (nucleophile) is an active-site residue. 2 disulfide bridges follow: Cys-51–Cys-57 and Cys-53–Cys-196. Asp-91 contacts Mg(2+). N-linked (GlcNAc...) asparagine glycosylation is present at Asn-256.

It belongs to the arthropod phospholipase D family. Class II subfamily. Mg(2+) is required as a cofactor. Expressed by the venom gland.

The protein resides in the secreted. It catalyses the reaction an N-(acyl)-sphingosylphosphocholine = an N-(acyl)-sphingosyl-1,3-cyclic phosphate + choline. The enzyme catalyses an N-(acyl)-sphingosylphosphoethanolamine = an N-(acyl)-sphingosyl-1,3-cyclic phosphate + ethanolamine. It carries out the reaction a 1-acyl-sn-glycero-3-phosphocholine = a 1-acyl-sn-glycero-2,3-cyclic phosphate + choline. The catalysed reaction is a 1-acyl-sn-glycero-3-phosphoethanolamine = a 1-acyl-sn-glycero-2,3-cyclic phosphate + ethanolamine. Its activity is regulated as follows. Inhibited with low affinity by edelfosine. Its function is as follows. Dermonecrotic toxins cleave the phosphodiester linkage between the phosphate and headgroup of certain phospholipids (sphingolipid and lysolipid substrates), forming an alcohol (often choline) and a cyclic phosphate. This toxin acts on sphingomyelin (SM). It also acts on a broad range of lysophospholipids, like lysophosphatidylinositol (LPI), lysophosphatidylglycerol (LPG), lysophosphatidylethanolamine (LPE), lysobisphosphatidic acid (LBPA), lysophosphatidylserine (LPS) and lysophosphatidylcholines (LPC) of varying chain lengths. The substrate preference is LPI &gt; LPG &gt; LPS &gt; LPC &gt;&gt; LPE, LBPA. Furthermore, the enzyme also act on cyclic phosphatidic acid and lyso-platelet activating factor (LPAF, an alkyl-LPC). The enzyme does not act on sphingosylphosphorylcholine (SPC, also known as lyso-sphingomyelin) and PAF. The toxin may also act on ceramide phosphoethanolamine (CPE). It acts by transphosphatidylation, releasing exclusively cyclic phosphate products as second products. It does not exhibit detectable PLA1/2 activity. It induces dose-dependent hemolysis and dermonecrosis. Also induces increased vascular permeability, edema, inflammatory response, and platelet aggregation. This chain is Dermonecrotic toxin LrSicTox-alphaIA1i, found in Loxosceles reclusa (Brown recluse spider).